Consider the following 292-residue polypeptide: MTVGTALPPPELRNCPAPAKLNLFLHVTGRRPDGYHTLQTVFQLIDWSDTLHFHRRDDGVITRVTDIPGVPADTDLVVRAARAMQAASGTRFGVDIAIDKILPMGGGIGGGSSDAATTLLALNRLWGVNLPREELMRIGLSLGADVPVFVFGQNAFAEGVGEELTPVALPDSWFVVIHPRQHVPTAAIFSDERLTRNSPISIVADFAACTNKFAFGRNDLETIATAKFGEVARALEWLKNYSPHARMTGSGACVFARFEDEQTAQRVMERLPSEWDGRCVKSLSHHPLATFA.

The active site involves lysine 20. 103 to 113 (PMGGGIGGGSS) lines the ATP pocket. Aspartate 145 is a catalytic residue.

This sequence belongs to the GHMP kinase family. IspE subfamily.

The enzyme catalyses 4-CDP-2-C-methyl-D-erythritol + ATP = 4-CDP-2-C-methyl-D-erythritol 2-phosphate + ADP + H(+). It functions in the pathway isoprenoid biosynthesis; isopentenyl diphosphate biosynthesis via DXP pathway; isopentenyl diphosphate from 1-deoxy-D-xylulose 5-phosphate: step 3/6. In terms of biological role, catalyzes the phosphorylation of the position 2 hydroxy group of 4-diphosphocytidyl-2C-methyl-D-erythritol. The chain is 4-diphosphocytidyl-2-C-methyl-D-erythritol kinase from Cupriavidus metallidurans (strain ATCC 43123 / DSM 2839 / NBRC 102507 / CH34) (Ralstonia metallidurans).